We begin with the raw amino-acid sequence, 260 residues long: 5-oxoprolinase subunit A 2 (260 aa).

Belongs to the LamB/PxpA family. In terms of assembly, forms a complex composed of PxpA, PxpB and PxpC.

The enzyme catalyses 5-oxo-L-proline + ATP + 2 H2O = L-glutamate + ADP + phosphate + H(+). Functionally, catalyzes the cleavage of 5-oxoproline to form L-glutamate coupled to the hydrolysis of ATP to ADP and inorganic phosphate. The polypeptide is 5-oxoprolinase subunit A 2 (Ralstonia nicotianae (strain ATCC BAA-1114 / GMI1000) (Ralstonia solanacearum)).